Reading from the N-terminus, the 1103-residue chain is Retinal guanylyl cyclase 2 (1103 aa).

Positions Met-1 to Leu-46 are cleaved as a signal peptide. At Gln-47–Asn-465 the chain is on the extracellular side. Cys-104 and Cys-132 are oxidised to a cystine. The helical transmembrane segment at Pro-466–Ile-490 threads the bilayer. Over Arg-491 to Trp-1103 the chain is Cytoplasmic. Positions Phe-532–Phe-812 constitute a Protein kinase domain. A Guanylate cyclase domain is found at Thr-884–Glu-1014.

Belongs to the adenylyl cyclase class-4/guanylyl cyclase family. In terms of assembly, homodimer. Interacts with RD3; promotes the exit of GUCY2F from the endoplasmic reticulum and its trafficking to the photoreceptor outer segments. Post-translationally, there are 9 conserved cysteine residues in sensory guanylate cyclases, 6 in the extracellular domain, which may be involved in intra- or interchain disulfide bonds. Expressed specifically in retina.

The protein resides in the membrane. It is found in the photoreceptor outer segment membrane. It carries out the reaction GTP = 3',5'-cyclic GMP + diphosphate. Its activity is regulated as follows. Activated by GUCA1B when free calcium ions concentration is low, and inhibited by GUCA1B when free calcium ions concentration is high. Inhibited by RD3. Its function is as follows. Responsible for the synthesis of cyclic GMP (cGMP) in rods and cones of photoreceptors. Plays an essential role in phototransduction, by mediating cGMP replenishment. May also participate in the trafficking of membrane-asociated proteins to the photoreceptor outer segment membrane. This is Retinal guanylyl cyclase 2 (GUCY2F) from Bos taurus (Bovine).